The primary structure comprises 230 residues: Probable GTP-binding protein EngB (230 aa).

Positions 36 to 224 constitute an EngB-type G domain; it reads ERPKVIVMGR…KHRINKRINI (189 aa). GTP-binding positions include 44-51, 69-73, 86-89, 166-169, and 201-203; these read GRSNVGKS, GVTLK, DLPG, NKMD, and VPA. Positions 51 and 71 each coordinate Mg(2+).

The protein belongs to the TRAFAC class TrmE-Era-EngA-EngB-Septin-like GTPase superfamily. EngB GTPase family. Mg(2+) serves as cofactor.

Its function is as follows. Necessary for normal cell division and for the maintenance of normal septation. The polypeptide is Probable GTP-binding protein EngB (Methanococcus maripaludis (strain DSM 14266 / JCM 13030 / NBRC 101832 / S2 / LL)).